Here is a 145-residue protein sequence, read N- to C-terminus: Superoxide dismutase [Mn/Fe] (145 aa).

Residues His-10 and His-64 each coordinate Fe(3+). Mn(2+) contacts are provided by His-10 and His-64.

The protein belongs to the iron/manganese superoxide dismutase family. Mn(2+) is required as a cofactor. The cofactor is Fe(3+).

It carries out the reaction 2 superoxide + 2 H(+) = H2O2 + O2. Destroys superoxide anion radicals which are normally produced within the cells and which are toxic to biological systems. Catalyzes the dismutation of superoxide anion radicals into O2 and H2O2 by successive reduction and oxidation of the transition metal ion at the active site. This is Superoxide dismutase [Mn/Fe] (sodA) from Streptococcus salivarius.